A 477-amino-acid chain; its full sequence is Ribulose bisphosphate carboxylase large chain (477 aa).

The propeptide occupies 1-2; the sequence is MS. Pro-3 carries the N-acetylproline modification. Lys-14 is subject to N6,N6,N6-trimethyllysine. Substrate contacts are provided by Asn-123 and Thr-173. The active-site Proton acceptor is the Lys-175. Lys-177 serves as a coordination point for substrate. Mg(2+)-binding residues include Lys-201, Asp-203, and Glu-204. Lys-201 is modified (N6-carboxylysine). His-294 serves as the catalytic Proton acceptor. The substrate site is built by Arg-295, His-327, and Ser-379.

This sequence belongs to the RuBisCO large chain family. Type I subfamily. Heterohexadecamer of 8 large chains and 8 small chains; disulfide-linked. The disulfide link is formed within the large subunit homodimers. Mg(2+) serves as cofactor. The disulfide bond which can form in the large chain dimeric partners within the hexadecamer appears to be associated with oxidative stress and protein turnover.

Its subcellular location is the plastid. The protein resides in the chloroplast. The catalysed reaction is 2 (2R)-3-phosphoglycerate + 2 H(+) = D-ribulose 1,5-bisphosphate + CO2 + H2O. It carries out the reaction D-ribulose 1,5-bisphosphate + O2 = 2-phosphoglycolate + (2R)-3-phosphoglycerate + 2 H(+). Its function is as follows. RuBisCO catalyzes two reactions: the carboxylation of D-ribulose 1,5-bisphosphate, the primary event in carbon dioxide fixation, as well as the oxidative fragmentation of the pentose substrate in the photorespiration process. Both reactions occur simultaneously and in competition at the same active site. The polypeptide is Ribulose bisphosphate carboxylase large chain (Atropa belladonna (Belladonna)).